A 200-amino-acid polypeptide reads, in one-letter code: 3-isopropylmalate dehydratase small subunit (200 aa).

Belongs to the LeuD family. LeuD type 1 subfamily. In terms of assembly, heterodimer of LeuC and LeuD.

It catalyses the reaction (2R,3S)-3-isopropylmalate = (2S)-2-isopropylmalate. Its pathway is amino-acid biosynthesis; L-leucine biosynthesis; L-leucine from 3-methyl-2-oxobutanoate: step 2/4. Functionally, catalyzes the isomerization between 2-isopropylmalate and 3-isopropylmalate, via the formation of 2-isopropylmaleate. The chain is 3-isopropylmalate dehydratase small subunit from Vibrio campbellii (strain ATCC BAA-1116).